The primary structure comprises 654 residues: tRNA 5-methylaminomethyl-2-thiouridine biosynthesis bifunctional protein MnmC (654 aa).

A tRNA (mnm(5)s(2)U34)-methyltransferase region spans residues methionine 1–valine 236. The segment at isoleucine 262–lysine 654 is FAD-dependent cmnm(5)s(2)U34 oxidoreductase.

It in the N-terminal section; belongs to the methyltransferase superfamily. tRNA (mnm(5)s(2)U34)-methyltransferase family. This sequence in the C-terminal section; belongs to the DAO family. FAD serves as cofactor.

Its subcellular location is the cytoplasm. It carries out the reaction 5-aminomethyl-2-thiouridine(34) in tRNA + S-adenosyl-L-methionine = 5-methylaminomethyl-2-thiouridine(34) in tRNA + S-adenosyl-L-homocysteine + H(+). Its function is as follows. Catalyzes the last two steps in the biosynthesis of 5-methylaminomethyl-2-thiouridine (mnm(5)s(2)U) at the wobble position (U34) in tRNA. Catalyzes the FAD-dependent demodification of cmnm(5)s(2)U34 to nm(5)s(2)U34, followed by the transfer of a methyl group from S-adenosyl-L-methionine to nm(5)s(2)U34, to form mnm(5)s(2)U34. The sequence is that of tRNA 5-methylaminomethyl-2-thiouridine biosynthesis bifunctional protein MnmC from Pseudomonas putida (strain ATCC 700007 / DSM 6899 / JCM 31910 / BCRC 17059 / LMG 24140 / F1).